Reading from the N-terminus, the 118-residue chain is UPF0344 protein BLi01172/BL01343 (118 aa).

The next 4 helical transmembrane spans lie at 6-26 (ITSW…YSSG), 33-53 (ITHM…AQLF), 62-82 (EYIA…MLLI), and 89-109 (AATG…VLGL).

This sequence belongs to the UPF0344 family.

It is found in the cell membrane. This Bacillus licheniformis (strain ATCC 14580 / DSM 13 / JCM 2505 / CCUG 7422 / NBRC 12200 / NCIMB 9375 / NCTC 10341 / NRRL NRS-1264 / Gibson 46) protein is UPF0344 protein BLi01172/BL01343.